The primary structure comprises 104 residues: Hydrogen cyanide synthase subunit HcnA (104 aa).

Positions 16–97 (ADMTIHLNGQ…GMRVETESNR (82 aa)) constitute a 2Fe-2S ferredoxin-type domain. [2Fe-2S] cluster is bound by residues Cys-60, Cys-65, Cys-68, and Cys-81.

Heterotrimer of HcnA, HcnB and HcnC.

The protein localises to the cell membrane. The enzyme catalyses glycine + 2 A = hydrogen cyanide + 2 AH2 + CO2. Oxygen is necessary for cyanogenesis. Activated by succinate, glycine methyl ester, glucose and D,L-methionine in addition to glycine. Phenazine methosulfate, methylene blue, 2,6-dichlorophenolindophenol (DCIP) and ferricyanide can replace oxygen for the reaction. Inhibited by pyrrolnitrin and acriflavine at 1 mM concentration. In terms of biological role, a three-component membrane-bound flavoenzyme that catalyzes the formation of hydrogen cyanide, a secondary metabolite, by transfer of electrons to a cyanide-resistant branch of the aerobic respiratory chain. This is Hydrogen cyanide synthase subunit HcnA from Pseudomonas aeruginosa (strain ATCC 15692 / DSM 22644 / CIP 104116 / JCM 14847 / LMG 12228 / 1C / PRS 101 / PAO1).